The chain runs to 553 residues: HTH-type transcriptional regulator SgrR (553 aa).

One can recognise an HTH marR-type domain in the interval 1–117; sequence MSTARLQQQF…LSQLGRSFRQ (117 aa). Positions 26-49 form a DNA-binding region, H-T-H motif; it reads LQELAEVLCCSRRHVRSLLGSMQQ. The interval 163 to 494 is solute-binding; it reads ELEPDLSHHW…EELHQDVELW (332 aa).

Activates the small RNA gene sgrS under glucose-phosphate stress conditions as well as yfdZ. Represses its own transcription under both stress and non-stress conditions. Might act as a sensor of the intracellular accumulation of phosphoglucose by binding these molecules in its C-terminal solute-binding domain. This chain is HTH-type transcriptional regulator SgrR, found in Yersinia enterocolitica serotype O:8 / biotype 1B (strain NCTC 13174 / 8081).